We begin with the raw amino-acid sequence, 412 residues long: MKIYLVGGAVRDKLLKLPVKDHDYMVVGATPEQMLSLGYNQVGKDFPVFLHPKTGQEYALARTERKTAAGYGGFSVDAAPTVTLEQDLLRRDLTINAIAQDDAGNLYDPYNGIADLEKRILRHVSDAFVEDPLRVLRVARFAARFHGLKFTIAPETLSLMTTLSRSGELEALTAERVYLELDKALSTDNPQVFFQVLKECGALAVLFPEIEALFGVPQPENWHPEIDTGIHTMMVLEQAAKLSDDNSVRFAALVHDLGKALSPKEHLPKHHGHGQKGLPLIKSLCERFRVPNEYRDLALLVCDQHQNIHKITELRADTLVKLFDKADFWRKPQRLEQLLIACEADSKGRKGLEQTAYPQADYLKQCFAAASAVEVKSIIAQGYKGAEIRTQLNVKRIAEVQAVKGLQPIEAK.

Positions 8 and 11 each coordinate ATP. Glycine 8 and arginine 11 together coordinate CTP. Aspartate 21 and aspartate 23 together coordinate Mg(2+). ATP contacts are provided by arginine 91, arginine 137, and arginine 140. 3 residues coordinate CTP: arginine 91, arginine 137, and arginine 140. The region spanning 228–329 (TGIHTMMVLE…VKLFDKADFW (102 aa)) is the HD domain.

It belongs to the tRNA nucleotidyltransferase/poly(A) polymerase family. Bacterial CCA-adding enzyme type 1 subfamily. Monomer. Can also form homodimers and oligomers. Mg(2+) serves as cofactor. It depends on Ni(2+) as a cofactor.

The enzyme catalyses a tRNA precursor + 2 CTP + ATP = a tRNA with a 3' CCA end + 3 diphosphate. It catalyses the reaction a tRNA with a 3' CCA end + 2 CTP + ATP = a tRNA with a 3' CCACCA end + 3 diphosphate. Functionally, catalyzes the addition and repair of the essential 3'-terminal CCA sequence in tRNAs without using a nucleic acid template. Adds these three nucleotides in the order of C, C, and A to the tRNA nucleotide-73, using CTP and ATP as substrates and producing inorganic pyrophosphate. tRNA 3'-terminal CCA addition is required both for tRNA processing and repair. Also involved in tRNA surveillance by mediating tandem CCA addition to generate a CCACCA at the 3' terminus of unstable tRNAs. While stable tRNAs receive only 3'-terminal CCA, unstable tRNAs are marked with CCACCA and rapidly degraded. This Shewanella pealeana (strain ATCC 700345 / ANG-SQ1) protein is Multifunctional CCA protein.